Consider the following 1330-residue polypeptide: Kinectin (1330 aa).

Residues 1–6 lie on the Cytoplasmic side of the membrane; that stretch reads MEFYES. The helical; Signal-anchor for type II membrane protein transmembrane segment at 7 to 29 threads the bilayer; the sequence is TYFIVLIPSVVITVIFLFFWLFM. The Lumenal segment spans residues 30 to 1330; it reads KETLYDEVLA…KEKEHYQVLE (1301 aa). Disordered stretches follow at residues 49 to 81 and 108 to 218; these read PTKTDKKKAEKKKNKKKEIQNGNLHESDSESVP and SSSV…KQKA. A phosphoserine mark is found at Ser-75 and Ser-77. Positions 113 to 122 are enriched in basic residues; sequence ERKKKEKKHK. Positions 123–135 are enriched in basic and acidic residues; sequence PVLEEQVTKESDV. Phosphothreonine is present on Thr-153. Ser-156 is subject to Phosphoserine. A compositionally biased stretch (basic residues) spans 161-171; sequence SKKKPGQKKSK. N-linked (GlcNAc...) asparagine glycans are attached at residues Asn-172, Asn-435, Asn-772, Asn-904, and Asn-1055. The segment covering 172–182 has biased composition (basic and acidic residues); sequence NGSDDQDKKVE. Positions 332-1329 form a coiled coil; that stretch reads HQLQEKDKLL…TKEKEHYQVL (998 aa). A Phosphoserine modification is found at Ser-1085. N-linked (GlcNAc...) asparagine glycosylation is present at Asn-1236. Ser-1286 is modified (phosphoserine). Residue Asn-1302 is glycosylated (N-linked (GlcNAc...) asparagine).

Belongs to the kinectin family. As to quaternary structure, parallel homodimers formed between the membrane-bound and the cytosolic form, and also between 2 cytosolic forms. Expressed in male brain, heart, kidney, liver, lung, spleen and testis.

The protein resides in the endoplasmic reticulum membrane. Receptor for kinesin thus involved in kinesin-driven vesicle motility. In Vulpes vulpes (Red fox), this protein is Kinectin (KTN1).